Here is a 683-residue protein sequence, read N- to C-terminus: DNA ligase (683 aa).

Residues 35–39 (DTEYD), 84–85 (SL), and E116 contribute to the NAD(+) site. K118 functions as the N6-AMP-lysine intermediate in the catalytic mechanism. The NAD(+) site is built by R139, E176, K293, and K317. Residues C419, C422, C437, and C443 each contribute to the Zn(2+) site. The BRCT domain occupies 602-683 (AGPQLLAGKT…LMKLLAKGVE (82 aa)).

Belongs to the NAD-dependent DNA ligase family. LigA subfamily. Mg(2+) is required as a cofactor. It depends on Mn(2+) as a cofactor.

The enzyme catalyses NAD(+) + (deoxyribonucleotide)n-3'-hydroxyl + 5'-phospho-(deoxyribonucleotide)m = (deoxyribonucleotide)n+m + AMP + beta-nicotinamide D-nucleotide.. In terms of biological role, DNA ligase that catalyzes the formation of phosphodiester linkages between 5'-phosphoryl and 3'-hydroxyl groups in double-stranded DNA using NAD as a coenzyme and as the energy source for the reaction. It is essential for DNA replication and repair of damaged DNA. This is DNA ligase from Dechloromonas aromatica (strain RCB).